The sequence spans 209 residues: Guanylate kinase (209 aa).

One can recognise a Guanylate kinase-like domain in the interval 9 to 188; the sequence is GIMLVISSPS…SVHQIKCIFT (180 aa). 16 to 23 provides a ligand contact to ATP; it reads SPSGGGKT.

This sequence belongs to the guanylate kinase family.

It is found in the cytoplasm. The enzyme catalyses GMP + ATP = GDP + ADP. Essential for recycling GMP and indirectly, cGMP. The protein is Guanylate kinase of Ehrlichia canis (strain Jake).